Consider the following 66-residue polypeptide: Large ribosomal subunit protein bL33c (66 aa).

This sequence belongs to the bacterial ribosomal protein bL33 family.

The protein localises to the plastid. It is found in the chloroplast. In Dioscorea elephantipes (Elephant's foot yam), this protein is Large ribosomal subunit protein bL33c.